The following is a 310-amino-acid chain: Transcription initiation factor IIB (310 aa).

A TFIIB-type zinc finger spans residues 9–41 (EKETKCPECGSDDLRGDYERAEIVCGKCGLVID). Zn(2+) contacts are provided by Cys14, Cys17, Cys33, and Cys36. 2 consecutive repeat copies span residues 127-210 (SELD…TREL) and 221-302 (DYVP…ELTE).

Belongs to the TFIIB family.

Stabilizes TBP binding to an archaeal box-A promoter. Also responsible for recruiting RNA polymerase II to the pre-initiation complex (DNA-TBP-TFIIB). In Methanothermobacter thermautotrophicus (strain ATCC 29096 / DSM 1053 / JCM 10044 / NBRC 100330 / Delta H) (Methanobacterium thermoautotrophicum), this protein is Transcription initiation factor IIB.